Reading from the N-terminus, the 404-residue chain is Druantia protein DruA (404 aa).

It is found in the cytoplasm. Component of antiviral defense system Druantia type I, composed of DruA, DruB, DruC, DruD and DruE. Expression of Druantia in E.coli (strain MG1655) confers resistance to phage lambda, SECphi18, SECphi27 and T4. In Escherichia coli (strain UMEA 4076-1), this protein is Druantia protein DruA.